The chain runs to 246 residues: 3-deoxy-manno-octulosonate cytidylyltransferase (246 aa).

This sequence belongs to the KdsB family.

Its subcellular location is the cytoplasm. The catalysed reaction is 3-deoxy-alpha-D-manno-oct-2-ulosonate + CTP = CMP-3-deoxy-beta-D-manno-octulosonate + diphosphate. Its pathway is nucleotide-sugar biosynthesis; CMP-3-deoxy-D-manno-octulosonate biosynthesis; CMP-3-deoxy-D-manno-octulosonate from 3-deoxy-D-manno-octulosonate and CTP: step 1/1. The protein operates within bacterial outer membrane biogenesis; lipopolysaccharide biosynthesis. Activates KDO (a required 8-carbon sugar) for incorporation into bacterial lipopolysaccharide in Gram-negative bacteria. The polypeptide is 3-deoxy-manno-octulosonate cytidylyltransferase (Leptospira borgpetersenii serovar Hardjo-bovis (strain JB197)).